Reading from the N-terminus, the 481-residue chain is ATP synthase subunit beta (481 aa).

An ATP-binding site is contributed by 167–174 (GGAGVGKT).

The protein belongs to the ATPase alpha/beta chains family. F-type ATPases have 2 components, CF(1) - the catalytic core - and CF(0) - the membrane proton channel. CF(1) has five subunits: alpha(3), beta(3), gamma(1), delta(1), epsilon(1). CF(0) has three main subunits: a(1), b(2) and c(9-12). The alpha and beta chains form an alternating ring which encloses part of the gamma chain. CF(1) is attached to CF(0) by a central stalk formed by the gamma and epsilon chains, while a peripheral stalk is formed by the delta and b chains.

It localises to the cell membrane. The catalysed reaction is ATP + H2O + 4 H(+)(in) = ADP + phosphate + 5 H(+)(out). Its function is as follows. Produces ATP from ADP in the presence of a proton gradient across the membrane. The catalytic sites are hosted primarily by the beta subunits. This is ATP synthase subunit beta from Corynebacterium diphtheriae (strain ATCC 700971 / NCTC 13129 / Biotype gravis).